We begin with the raw amino-acid sequence, 380 residues long: Cytochrome b (380 aa).

The next 4 helical transmembrane spans lie at 33 to 53, 77 to 98, 113 to 133, and 178 to 198; these read FGSL…FLAM, WLIR…FLHV, WNMG…GYVL, and FFAF…VHLL. Residues His83 and His97 each coordinate heme b. 2 residues coordinate heme b: His182 and His196. A ubiquinone is bound at residue His201. The next 4 membrane-spanning stretches (helical) occupy residues 226–246, 288–308, 320–340, and 347–367; these read IKDL…VLFF, LGGV…PLLH, ITQT…WIGG, and FIMI…IFMP.

The protein belongs to the cytochrome b family. The cytochrome bc1 complex contains 11 subunits: 3 respiratory subunits (MT-CYB, CYC1 and UQCRFS1), 2 core proteins (UQCRC1 and UQCRC2) and 6 low-molecular weight proteins (UQCRH/QCR6, UQCRB/QCR7, UQCRQ/QCR8, UQCR10/QCR9, UQCR11/QCR10 and a cleavage product of UQCRFS1). This cytochrome bc1 complex then forms a dimer. It depends on heme b as a cofactor.

Its subcellular location is the mitochondrion inner membrane. Its function is as follows. Component of the ubiquinol-cytochrome c reductase complex (complex III or cytochrome b-c1 complex) that is part of the mitochondrial respiratory chain. The b-c1 complex mediates electron transfer from ubiquinol to cytochrome c. Contributes to the generation of a proton gradient across the mitochondrial membrane that is then used for ATP synthesis. This chain is Cytochrome b (MT-CYB), found in Synaptomys borealis (Northern bog lemming).